We begin with the raw amino-acid sequence, 473 residues long: Argininosuccinate lyase (473 aa).

The protein belongs to the lyase 1 family. Argininosuccinate lyase subfamily.

The protein resides in the cytoplasm. It catalyses the reaction 2-(N(omega)-L-arginino)succinate = fumarate + L-arginine. It participates in amino-acid biosynthesis; L-arginine biosynthesis; L-arginine from L-ornithine and carbamoyl phosphate: step 3/3. The polypeptide is Argininosuccinate lyase (Streptomyces clavuligerus).